The primary structure comprises 2139 residues: Voltage-dependent L-type calcium channel subunit alpha-1C (2139 aa).

Residues 1-20 are disordered; sequence MVNENTRMYVPEENHQGSNY. Residues 1–124 are Cytoplasmic-facing; it reads MVNENTRMYV…RACISIVEWK (124 aa). Positions 47 to 68 are calmodulin-binding; sequence GAALSWQAAIDAARQAKLMGSA. The segment at 73 to 98 is disordered; that stretch reads ISTVSSTQRKRQQYGKPKKQGGTTAT. Positions 80-91 are enriched in basic residues; that stretch reads QRKRQQYGKPKK. The I repeat unit spans residues 111–408; the sequence is NPIRRACISI…LVLGVLSGEF (298 aa). A helical membrane pass occupies residues 125–143; the sequence is PFEIIILLTIFANCVALAI. The Extracellular portion of the chain corresponds to 144–158; that stretch reads YIPFPEDDSNATNSN. N153 carries N-linked (GlcNAc...) asparagine glycosylation. The helical transmembrane segment at 159–179 threads the bilayer; the sequence is LERVEYLFLIIFTVEAFLKVI. The Cytoplasmic segment spans residues 180-188; it reads AYGLLFHPN. Residues 189 to 209 traverse the membrane as a helical segment; the sequence is AYLRNGWNLLDFIIVVVGLFS. The Extracellular portion of the chain corresponds to 210 to 232; the sequence is AILEQATKADGANALGGKGAGFD. A helical membrane pass occupies residues 233–251; the sequence is VKALRAFRVLRPLRLVSGV. At 252 to 268 the chain is on the cytoplasmic side; that stretch reads PSLQVVLNSIIKAMVPL. Residues 269–290 traverse the membrane as a helical segment; the sequence is LHIALLVLFVIIIYAIIGLELF. Topologically, residues 291 to 350 are extracellular; it reads MGKMHKTCYNQEGIIDVPAEEDPSPCALETGHGRQCQNGTVCKPGWDGPKHGITNFDNFA. 2 disulfides stabilise this stretch: C298-C326 and C316-C332. N328 carries an N-linked (GlcNAc...) asparagine glycan. The pore-forming intramembrane region spans 351 to 372; the sequence is FAMLTVFQCITMEGWTDVLYWM. Residues 361–364 carry the Selectivity filter of repeat I motif; the sequence is TMEG. Ca(2+) is bound at residue E363. Residues 373–380 lie on the Extracellular side of the membrane; sequence QDAMGYEL. Residues 381–401 traverse the membrane as a helical segment; sequence PWVYFVSLVIFGSFFVLNLVL. Over 402–524 the chain is Cytoplasmic; that stretch reads GVLSGEFSKE…RKCRAAVKSN (123 aa). The AID/alpha-interaction domain; mediates interaction with the beta subunit stretch occupies residues 428 to 445; it reads QQLEEDLKGYLDWITQAE. Residues 449–481 form a disordered region; the sequence is PENEDEGMDEDKPRNMSMPTSETESVNTENVAG. A compositionally biased stretch (polar residues) spans 465–478; the sequence is SMPTSETESVNTEN. S469 is subject to Phosphoserine. T476 is subject to Phosphothreonine. The stretch at 510–756 is one II repeat; the sequence is NRFCRRKCRA…VFLAIAVDNL (247 aa). Residues 525 to 543 form a helical membrane-spanning segment; that stretch reads VFYWLVIFLVFLNTLTIAS. Over 544–554 the chain is Extracellular; the sequence is EHYNQPHWLTE. Residues 555–575 form a helical membrane-spanning segment; sequence VQDTANKALLALFTAEMLLKM. At 576–586 the chain is on the cytoplasmic side; that stretch reads YSLGLQAYFVS. The helical transmembrane segment at 587 to 606 threads the bilayer; it reads LFNRFDCFIVCGGILETILV. At 607–615 the chain is on the extracellular side; that stretch reads ETKIMSPLG. The chain crosses the membrane as a helical span at residues 616–634; the sequence is ISVLRCVRLLRIFKITRYW. Over 635 to 653 the chain is Cytoplasmic; sequence NSLSNLVASLLNSVRSIAS. Residues 654–673 traverse the membrane as a helical segment; that stretch reads LLLLLFLFIIIFSLLGMQLF. Residues 674–693 lie on the Extracellular side of the membrane; that stretch reads GGKFNFDEMQTRRSTFDNFP. The segment at residues 694–715 is an intramembrane region (pore-forming); it reads QSLLTVFQILTGEDWNSVMYDG. A Selectivity filter of repeat II motif is present at residues 704-707; it reads TGED. Residue E706 coordinates Ca(2+). Topologically, residues 716–725 are extracellular; sequence IMAYGGPSFP. A helical membrane pass occupies residues 726-745; it reads GMLVCIYFIILFICGNYILL. Topologically, residues 746–900 are cytoplasmic; sequence NVFLAIAVDN…LQCHRIVNDT (155 aa). A disordered region spans residues 764-861; it reads SAQKEEEEEK…EMPVGPRPRP (98 aa). Over residues 783–806 the composition is skewed to basic and acidic residues; the sequence is SPEKKQEVMEKPAVEESKEEKIEL. Phosphoserine occurs at positions 808 and 815. The interval 829–876 is interaction with STAC2; that stretch reads SENEDKSPHSNPDTAGEEDEEEPEMPVGPRPRPLSELHLKEKAVPMPE. Positions 843–852 are enriched in acidic residues; that stretch reads AGEEDEEEPE. An III repeat occupies 887–1169; it reads NRFRLQCHRI…IFVGFVIVTF (283 aa). The helical transmembrane segment at 901–919 threads the bilayer; that stretch reads IFTNLILFFILLSSISLAA. Residues 920-931 are Extracellular-facing; the sequence is EDPVQHTSFRNH. A helical transmembrane segment spans residues 932 to 951; that stretch reads ILGNADYVFTSIFTLEIILK. Topologically, residues 952-967 are cytoplasmic; it reads MTAYGAFLHKGSFCRN. A helical transmembrane segment spans residues 968-986; the sequence is YFNILDLLVVSVSLISFGI. Topologically, residues 987–993 are extracellular; that stretch reads QSSAINV. Residues 994–1012 form a helical membrane-spanning segment; it reads VKILRVLRVLRPLRAINRA. The Cytoplasmic portion of the chain corresponds to 1013–1031; the sequence is KGLKHVVQCVFVAIRTIGN. A helical membrane pass occupies residues 1032 to 1051; that stretch reads IVIVTTLLQFMFACIGVQLF. Over 1052-1101 the chain is Extracellular; it reads KGKLYTCSDSSKQTEAECKGNYITYKDGEVDHPIIQPRSWENSKFDFDNV. C1058 and C1069 are joined by a disulfide. Residues 1089–1178 form a dihydropyridine binding region; that stretch reads RSWENSKFDF…FQEQGEQEYK (90 aa). The segment at residues 1102 to 1122 is an intramembrane region (pore-forming); sequence LAAMMALFTVSTFEGWPELLY. A Selectivity filter of repeat III motif is present at residues 1113 to 1116; sequence TFEG. Position 1115 (E1115) interacts with Ca(2+). Topologically, residues 1123–1139 are extracellular; it reads RSIDSHTEDKGPIYNYR. A helical transmembrane segment spans residues 1140–1161; the sequence is VEISIFFIIYIIIIAFFMMNIF. Over 1162 to 1219 the chain is Cytoplasmic; it reads VGFVIVTFQEQGEQEYKNCELDKNQRQCVEYALKARPLRRYIPKNQHQYKVWYVVNST. The stretch at 1206-1479 is one IV repeat; sequence NQHQYKVWYV…LFVAVIMDNF (274 aa). Residues 1220 to 1241 form a helical membrane-spanning segment; the sequence is YFEYLMFVLILLNTICLAMQHY. The Extracellular segment spans residues 1242–1249; the sequence is GQSCLFKI. Residues 1250–1271 traverse the membrane as a helical segment; sequence AMNILNMLFTGLFTVEMILKLI. Topologically, residues 1272-1281 are cytoplasmic; sequence AFKPKGYFSD. The helical transmembrane segment at 1282 to 1301 threads the bilayer; sequence PWNVFDFLIVIGSIIDVILS. The Extracellular segment spans residues 1302-1324; the sequence is ETNPAEHTQCSPSMSAEENSRIS. The helical transmembrane segment at 1325 to 1343 threads the bilayer; sequence ITFFRLFRVMRLVKLLSRG. The Cytoplasmic segment spans residues 1344 to 1361; that stretch reads EGIRTLLWTFIKSFQALP. A helical transmembrane segment spans residues 1362-1382; the sequence is YVALLIVMLFFIYAVIGMQVF. The Extracellular segment spans residues 1383-1404; it reads GKIALNDTTEINRNNNFQTFPQ. N-linked (GlcNAc...) asparagine glycosylation occurs at N1388. Residues 1405–1423 constitute an intramembrane region (pore-forming); that stretch reads AVLLLFRCATGEAWQDIML. The short motif at 1414–1417 is the Selectivity filter of repeat IV element; sequence TGEA. At 1424–1451 the chain is on the extracellular side; it reads ACMPGKKCAPESEPSNSTEGETPCGSSF. The segment at 1430–1498 is dihydropyridine binding; that stretch reads KCAPESEPSN…LGPHHLDEFK (69 aa). Residues C1431 and C1447 are joined by a disulfide bond. An N-linked (GlcNAc...) asparagine glycan is attached at N1439. Residues 1444 to 1486 are phenylalkylamine binding; the sequence is ETPCGSSFAVFYFISFYMLCAFLIINLFVAVIMDNFDYLTRDW. Residues 1452–1476 traverse the membrane as a helical segment; that stretch reads AVFYFISFYMLCAFLIINLFVAVIM. Topologically, residues 1477–2139 are cytoplasmic; it reads DNFDYLTRDW…ADSRSYVSNL (663 aa). Residues 1611-1638 are important for interaction with STAC1, STAC2 and STAC3; that stretch reads DEVTVGKFYATFLIQEYFRKFKKRKEQG. The calmodulin-binding stretch occupies residues 1611–1644; it reads DEVTVGKFYATFLIQEYFRKFKKRKEQGLVGKPS. The calmodulin-binding IQ region stretch occupies residues 1617–1637; it reads KFYATFLIQEYFRKFKKRKEQ. Residues 1651-1670 are important for localization in at the junctional membrane; sequence LQAGLRTLHDIGPEIRRAIS. 2 positions are modified to phosphoserine: S1670 and S1691. Polar residues-rich tracts occupy residues 1732 to 1741 and 1751 to 1763; these read KTGNNQADTE and STFT…STGS. Residues 1732-1773 form a disordered region; sequence KTGNNQADTESPSHEKLVDSTFTPSSYSSTGSNANINNANNT. Low complexity predominate over residues 1764–1773; that stretch reads NANINNANNT. S1897 carries the phosphoserine; by PKA modification. Residues 1940–1966 are disordered; sequence RSHSPTTFPRPCPTPPVTPGSRGRPLR. Pro residues predominate over residues 1947–1957; sequence FPRPCPTPPVT.

Belongs to the calcium channel alpha-1 subunit (TC 1.A.1.11) family. CACNA1C subfamily. In terms of assembly, component of a calcium channel complex consisting of a pore-forming alpha subunit (CACNA1C) and ancillary beta, gamma and delta subunits. The channel complex contains alpha, beta, gamma and delta subunits in a 1:1:1:1 ratio, i.e. it contains only one of each type of subunit. CACNA1C channel activity is modulated by ancillary subunits, such as CACNB1, CACNB2, CACNB3, CACNA2D1 and CACNA2D4. Interacts with the gamma subunits CACNG4, CACNG6, CACNG7 and CACNG8. Interacts with CACNB1. Interacts with CACNB2. Identified in a complex with CACNA2D4 and CACNB3. Interacts with CACNB3. Interacts with CACNA2D1. Interacts with CACNA2D4. Interacts with CALM1. Interacts (via the N-terminus and the C-terminal C and IQ motifs) with CABP1; this inhibits Ca(2+)-dependent channel inactivation. The binding via the C motif is calcium independent whereas the binding via IQ requires the presence of calcium and is mutually exclusive with calmodulin binding. The binding to the cytoplasmic N-terminal domain is calcium independent but is essential for the channel modulation. Interacts (via C-terminal CDB motif) with CABP5; in a calcium-dependent manner. Interacts with CIB1; the interaction increases upon cardiomyocytes hypertrophy. Interacts with STAC2 and STAC3; this inhibits channel inactivation. Post-translationally, phosphorylation by PKA at Ser-1897 activates the channel. Elevated levels of blood glucose lead to increased phosphorylation by PKA. As to expression, detected in embryonic heart. Detected in retina in rod bipolar cells. Detected in tibialis artery (at protein level). Detected in smooth muscle cells from tibialis artery and in mesenteric artery. High expression in heart, followed by brain and spinal cord.

The protein resides in the cell membrane. The protein localises to the sarcolemma. It is found in the perikaryon. Its subcellular location is the postsynaptic density membrane. It localises to the cell projection. The protein resides in the dendrite. The protein localises to the T-tubule. The catalysed reaction is Ca(2+)(in) = Ca(2+)(out). Inhibited by dihydropyridines (DHP), such as isradipine. Inhibited by nifedipine. Channel activity is regulated by Ca(2+) and calmodulin. Binding of STAC1, STAC2 or STAC3 to a region that overlaps with the calmodulin binding site inhibits channel inactivation by Ca(2+) and calmodulin. Binding of calmodulin or CABP1 at the same regulatory sites results in opposite effects on the channel function. Shear stress and pressure increases calcium channel activity. Its function is as follows. Pore-forming, alpha-1C subunit of the voltage-gated calcium channel that gives rise to L-type calcium currents. Mediates influx of calcium ions into the cytoplasm, and thereby triggers calcium release from the sarcoplasm. Plays an important role in excitation-contraction coupling in the heart. Required for normal heart development and normal regulation of heart rhythm. Required for normal contraction of smooth muscle cells in blood vessels and in the intestine. Essential for normal blood pressure regulation via its role in the contraction of arterial smooth muscle cells. Long-lasting (L-type) calcium channels belong to the 'high-voltage activated' (HVA) group. The protein is Voltage-dependent L-type calcium channel subunit alpha-1C (Cacna1c) of Mus musculus (Mouse).